The sequence spans 259 residues: 5'-nucleotidase SurE (259 aa).

Positions 8, 9, 39, and 96 each coordinate a divalent metal cation.

This sequence belongs to the SurE nucleotidase family. Requires a divalent metal cation as cofactor.

It is found in the cytoplasm. The enzyme catalyses a ribonucleoside 5'-phosphate + H2O = a ribonucleoside + phosphate. In terms of biological role, nucleotidase that shows phosphatase activity on nucleoside 5'-monophosphates. The polypeptide is 5'-nucleotidase SurE (Pelotomaculum thermopropionicum (strain DSM 13744 / JCM 10971 / SI)).